The primary structure comprises 92 residues: Small ribosomal subunit protein uS19 (92 aa).

Belongs to the universal ribosomal protein uS19 family.

Functionally, protein S19 forms a complex with S13 that binds strongly to the 16S ribosomal RNA. This is Small ribosomal subunit protein uS19 from Corynebacterium efficiens (strain DSM 44549 / YS-314 / AJ 12310 / JCM 11189 / NBRC 100395).